Here is a 132-residue protein sequence, read N- to C-terminus: ATP synthase epsilon chain, chloroplastic (132 aa).

Belongs to the ATPase epsilon chain family. In terms of assembly, F-type ATPases have 2 components, CF(1) - the catalytic core - and CF(0) - the membrane proton channel. CF(1) has five subunits: alpha(3), beta(3), gamma(1), delta(1), epsilon(1). CF(0) has three main subunits: a, b and c.

It localises to the plastid. Its subcellular location is the chloroplast thylakoid membrane. Its function is as follows. Produces ATP from ADP in the presence of a proton gradient across the membrane. This is ATP synthase epsilon chain, chloroplastic from Pylaiella littoralis (Seaweed).